The chain runs to 670 residues: E3 ubiquitin-protein ligase TRAF7 (670 aa).

Disordered regions lie at residues 1 to 37 (MSSG…FGPA) and 49 to 97 (GTST…SLHS). Composition is skewed to polar residues over residues 15 to 31 (GPSN…TRME) and 49 to 67 (GTST…STLA). Ser61, Ser88, and Ser91 each carry phosphoserine. Residues 131–165 (CQLCCSVFKDPVITTCGHTFCRRCALKSEKCPVDN) form an RING-type zinc finger. The TRAF-type zinc-finger motif lies at 222–276 (HEGSCDYRPVRCPNNPSCPPLLRMNLEAHLKECEHIKCPHSKYGCTFIGNQDTYE). WD repeat units lie at residues 394–433 (GHQG…KCQK), 437–474 (GHDG…KVNT), 477–513 (AHDN…LKLK), 515–554 (ELTG…CIHV), 557–594 (TSGG…QVRT), 597–638 (GHVG…CTQT), and 641–669 (RHQG…KVWT).

The protein belongs to the WD repeat TRAF7 family. In terms of assembly, homodimer. Interacts with MAP3K3 and promotes the kinase activity of this enzyme. Phosphorylated by MAP3K3. In terms of processing, ubiquitinates itself upon phosphorylation. As to expression, ubiquitously expressed with high levels in skeletal muscle, heart, colon, spleen, kidney, liver and placenta.

It is found in the cytoplasmic vesicle. It localises to the cytoplasm. The protein resides in the nucleus. The catalysed reaction is S-ubiquitinyl-[E2 ubiquitin-conjugating enzyme]-L-cysteine + [acceptor protein]-L-lysine = [E2 ubiquitin-conjugating enzyme]-L-cysteine + N(6)-ubiquitinyl-[acceptor protein]-L-lysine.. Its pathway is protein modification; protein ubiquitination. Its function is as follows. E3 ubiquitin and SUMO-protein ligase that plays a role in different biological processes such as innate immunity, inflammation or apoptosis. Potentiates MAP3K3-mediated activation of JUN/AP1 and DDIT3 transcriptional regulators. Negatively regulates MYB transcriptional activity by sequestering it to the cytosol via SUMOylation. Plays a role in the phosphorylation of MAPK1 and/or MAPK3, probably via its interaction with MAP3K3. Negatively regulates RLR-mediated innate immunity by promoting 'Lys-48'-linked ubiquitination of TBK1 through its RING domain to inhibit the cellular antiviral response. Promotes 'Lys-29'-linked polyubiquitination of NEMO/IKBKG and RELA leading to targeting these two proteins to lysosomal degradative pathways, reducing the transcriptional activity of NF-kappa-B. This Homo sapiens (Human) protein is E3 ubiquitin-protein ligase TRAF7 (TRAF7).